The sequence spans 34 residues: Cytochrome b6-f complex subunit 5 (34 aa).

A helical transmembrane segment spans residues 5-25 (LLSGIVLGLVPVTLAGLFVTA).

It belongs to the PetG family. In terms of assembly, the 4 large subunits of the cytochrome b6-f complex are cytochrome b6, subunit IV (17 kDa polypeptide, PetD), cytochrome f and the Rieske protein, while the 4 small subunits are PetG, PetL, PetM and PetN. The complex functions as a dimer.

The protein localises to the plastid. It localises to the chloroplast thylakoid membrane. In terms of biological role, component of the cytochrome b6-f complex, which mediates electron transfer between photosystem II (PSII) and photosystem I (PSI), cyclic electron flow around PSI, and state transitions. PetG is required for either the stability or assembly of the cytochrome b6-f complex. This Oltmannsiellopsis viridis (Marine flagellate) protein is Cytochrome b6-f complex subunit 5.